Here is a 112-residue protein sequence, read N- to C-terminus: cAMP-regulated phosphoprotein 19 (112 aa).

Methionine 1 carries the post-translational modification N-acetylmethionine. The segment covering 1–11 (MSAEVPEAASA) has biased composition (low complexity). Residues 1 to 49 (MSAEVPEAASAEEQKEMEDKVTSPEKAEEAKLKARYPHLGQKPGGSDFL) are disordered. Serine 2 carries the post-translational modification N-acetylserine. A phosphoserine mark is found at serine 2 and serine 23. The span at 12-32 (EEQKEMEDKVTSPEKAEEAKL) shows a compositional bias: basic and acidic residues. Residues serine 62 and serine 104 each carry the phosphoserine; by GWL modification. The disordered stretch occupies residues 73 to 112 (KNKQLPTAAPDKTEVTGDHIPTPQDLPQRKPSLVASKLAG). At serine 104 the chain carries Phosphoserine; by PKA. Lysine 109 is subject to N6-acetyllysine.

It belongs to the endosulfine family. In terms of assembly, interacts (when phosphorylated at Ser-62) with PPP2R2D. Interacts with SNCA. Interacts with PPP2R2A; the interaction is direct and this interaction inhibits PP2A activity. In terms of processing, phosphorylation at Ser-62 by MASTL/GWL during mitosis is essential for interaction with PPP2R2D (PR55-delta) and subsequent inactivation of PP2A. Phosphorylated by PKA.

It is found in the cytoplasm. Its function is as follows. Protein phosphatase inhibitor that specifically inhibits protein phosphatase 2A (PP2A) during mitosis. Inhibition of PP2A is enhanced when ARPP19 is phosphorylated. When phosphorylated at Ser-62 during mitosis, specifically interacts with PPP2R2D (PR55-delta) and inhibits its activity, leading to inactivation of PP2A, an essential condition to keep cyclin-B1-CDK1 activity high during M phase. May indirectly enhance GAP-43 expression. The sequence is that of cAMP-regulated phosphoprotein 19 (ARPP19) from Homo sapiens (Human).